Here is a 268-residue protein sequence, read N- to C-terminus: Centromere protein Q (268 aa).

The tract at residues Met1–Ser31 is disordered. Residue Ser31 is modified to Phosphoserine. A coiled-coil region spans residues Glu170 to Ile203. Ser249 is subject to Phosphoserine.

It belongs to the CENP-Q/OKP1 family. As to quaternary structure, component of the CENPA-CAD complex, composed of CENPI, CENPK, CENPL, CENPO, CENPP, CENPQ, CENPR and CENPS. The CENPA-CAD complex interacts with the CENPA-NAC complex, at least composed of CENPA, CENPC, CENPH, CENPM, CENPN, CENPT and CENPU.

Its subcellular location is the nucleus. It is found in the chromosome. The protein resides in the centromere. Its function is as follows. Component of the CENPA-CAD (nucleosome distal) complex, a complex recruited to centromeres which is involved in assembly of kinetochore proteins, mitotic progression and chromosome segregation. May be involved in incorporation of newly synthesized CENPA into centromeres via its interaction with the CENPA-NAC complex. Plays an important role in chromosome congression and in the recruitment of CENP-O complex (which comprises CENPO, CENPP, CENPQ and CENPU), CENPE and PLK1 to the kinetochores. This is Centromere protein Q (CENPQ) from Macaca fascicularis (Crab-eating macaque).